The following is a 466-amino-acid chain: MAIHLPCLPMMKILSYLDAYSLLQAAQVNKDWNELASSDVLWRKLCQKRWLYCDMDTLQLQGKETWKQFFIDRIWQERAKFRAKAKDFTYKEIPLMCGLFGYACYISGCGLTRKGQDKSVVCMVNSKNTISTWDVHKSVITWKSPEQPASIKLLTTLPEMHIAVTVDIQSTIKLWDCHNREALATNNLKSPCKSLKAVFTKDGPIVLIGDTLGNIHIFRIPDLYLISTVNVLPYGFDGIYCSPQKKWVLLSKKHPHILPKVFYMSSFLRTSEFSAPVSTVLKLSLYERVFWTPRREDRITLMSRSGFPQVKMFETYDIKLEEFGNKRIVKGKLIASFELQCHKVNPQRFGVSDKNVIVCSTESSLLLFDINGLRLKTFQYCPEMIVKLSVDPLHVIVICNTGSMDVYAWEERSLLLRKCYRLHIERPLPLYGFIYKAACDDVSIIQLITDELSLSSLTSYALNICS.

The region spanning 1–45 (MAIHLPCLPMMKILSYLDAYSLLQAAQVNKDWNELASSDVLWRKL) is the F-box domain. WD repeat units follow at residues 101–143 (GYAC…ITWK), 146–185 (EQPA…ALAT), 187–228 (NLKS…LIST), 339–379 (LQCH…KTFQ), and 381–419 (CPEM…LRKC).

In terms of assembly, part of an SCF (SKP1-CUL1-F-box protein) E3 ubiquitin-protein ligase complex. Interacts with KAT7 and SKP1. As to expression, specifically expressed in oocytes from follicles of the medullary region of the ovary.

Its subcellular location is the cytoplasm. It localises to the cytosol. It is found in the endoplasmic reticulum. The protein localises to the nucleus. Its pathway is protein modification; protein ubiquitination. Functionally, substrate-recognition component of an SCF (SKP1-CUL1-F-box protein)-type E3 ubiquitin ligase complex. Promotes KAT7 ubiquitination and subsequent degradation in collaboration with MAP2K1 kinase, leading to reduced histone H3K14 acetylation and increased cell proliferation. This chain is F-box/WD repeat-containing protein 15, found in Mus musculus (Mouse).